The following is a 72-amino-acid chain: Translation initiation factor IF-1 (72 aa).

Residues 1–72 (MAKEDVIEVE…TRGRITYRYK (72 aa)) form the S1-like domain. Tyr60 is subject to Phosphotyrosine.

It belongs to the IF-1 family. In terms of assembly, component of the 30S ribosomal translation pre-initiation complex which assembles on the 30S ribosome in the order IF-2 and IF-3, IF-1 and N-formylmethionyl-tRNA(fMet); mRNA recruitment can occur at any time during PIC assembly.

Its subcellular location is the cytoplasm. One of the essential components for the initiation of protein synthesis. Stabilizes the binding of IF-2 and IF-3 on the 30S subunit to which N-formylmethionyl-tRNA(fMet) subsequently binds. Helps modulate mRNA selection, yielding the 30S pre-initiation complex (PIC). Upon addition of the 50S ribosomal subunit IF-1, IF-2 and IF-3 are released leaving the mature 70S translation initiation complex. The polypeptide is Translation initiation factor IF-1 (Shouchella clausii (strain KSM-K16) (Alkalihalobacillus clausii)).